The sequence spans 852 residues: Pentatricopeptide repeat-containing protein At5g02830, chloroplastic (852 aa).

A chloroplast-targeting transit peptide spans 1–25; that stretch reads MRDFVIVFGSSSAITNPHHHHRRCY. Positions 17-60 are disordered; it reads PHHHHRRCYATAPESNRKTKSNSSFTKLLPSLPQQHSPSPASVS. Positions 44-58 are enriched in low complexity; sequence LLPSLPQQHSPSPAS. 8 PPR repeats span residues 334-364, 373-407, 408-442, 443-477, 525-557, 558-592, 593-627, and 628-665; these read DMTS…AKRM, DAFT…GVTP, NTHT…GCEP, NSQC…SVNE, TTAT…GLSP, NQIT…GTRP, DVVA…QIKP, and NWVT…GYKP.

It belongs to the PPR family. P subfamily.

The protein resides in the plastid. Its subcellular location is the chloroplast. The polypeptide is Pentatricopeptide repeat-containing protein At5g02830, chloroplastic (Arabidopsis thaliana (Mouse-ear cress)).